Consider the following 177-residue polypeptide: Large ribosomal subunit protein uL5 (177 aa).

The protein belongs to the universal ribosomal protein uL5 family. Part of the 50S ribosomal subunit; part of the 5S rRNA/L5/L18/L25 subcomplex. Contacts the 5S rRNA and the P site tRNA. Forms a bridge to the 30S subunit in the 70S ribosome.

Its function is as follows. This is one of the proteins that bind and probably mediate the attachment of the 5S RNA into the large ribosomal subunit, where it forms part of the central protuberance. In the 70S ribosome it contacts protein S13 of the 30S subunit (bridge B1b), connecting the 2 subunits; this bridge is implicated in subunit movement. Contacts the P site tRNA; the 5S rRNA and some of its associated proteins might help stabilize positioning of ribosome-bound tRNAs. The polypeptide is Large ribosomal subunit protein uL5 (Wolbachia pipientis wMel).